Consider the following 435-residue polypeptide: Succinate--CoA ligase [ADP-forming] subunit beta, mitochondrial (435 aa).

The transit peptide at 1 to 20 (MIGRISQPLLNTSQKFMAPA) directs the protein to the mitochondrion. Residues 32 to 259 (MKILQNYEIK…SNAEFRQAKL (228 aa)) form the ATP-grasp domain. ATP-binding positions include lysine 69 and 76 to 78 (GRG). Residues asparagine 229 and aspartate 243 each contribute to the Mg(2+) site. Substrate-binding positions include asparagine 294 and 352 to 354 (GIM).

This sequence belongs to the succinate/malate CoA ligase beta subunit family. ATP-specific subunit beta subfamily. As to quaternary structure, heterodimer of an alpha and a beta subunit. The beta subunit determines specificity for ATP. Requires Mg(2+) as cofactor.

The protein resides in the mitochondrion. It carries out the reaction succinate + ATP + CoA = succinyl-CoA + ADP + phosphate. Its pathway is carbohydrate metabolism; tricarboxylic acid cycle; succinate from succinyl-CoA (ligase route): step 1/1. Functionally, ATP-specific succinyl-CoA synthetase functions in the citric acid cycle (TCA), coupling the hydrolysis of succinyl-CoA to the synthesis of ATP and thus represents the only step of substrate-level phosphorylation in the TCA. The beta subunit provides nucleotide specificity of the enzyme and binds the substrate succinate, while the binding sites for coenzyme A and phosphate are found in the alpha subunit. The sequence is that of Succinate--CoA ligase [ADP-forming] subunit beta, mitochondrial from Caenorhabditis elegans.